The following is a 157-amino-acid chain: MFDVLIYLFETYMHNEPEMLVDQDKITDDLADAGFYREDINNALNWLEVLADLQEGQKAPYLYTADPQALRIYTVEECRRLGAACRGFILFLEQIQVLQFDAREMVIDRIMALDSPEIDLEDLKWVVLMVLFNIPGYENAYKQMEELLFEVNDGYLH.

Belongs to the Smg family.

The polypeptide is Protein Smg (Yersinia pestis (strain Pestoides F)).